Reading from the N-terminus, the 176-residue chain is PKHD-type hydroxylase Mfla_0096 (176 aa).

The 70-residue stretch at 78-147 (KVFPPLFNRY…NQIARGTYGA (70 aa)) folds into the Fe2OG dioxygenase domain.

Fe(2+) serves as cofactor. The cofactor is L-ascorbate.

The sequence is that of PKHD-type hydroxylase Mfla_0096 from Methylobacillus flagellatus (strain ATCC 51484 / DSM 6875 / VKM B-1610 / KT).